Reading from the N-terminus, the 374-residue chain is Carboxypeptidase O (374 aa).

A signal peptide spans 1–20 (MKPLLETLYLLGMLVPGGLG). In terms of domain architecture, Peptidase M14 spans 49-344 (IYHPMGEIYE…EAVLSVLDDV (296 aa)). Positions 108 and 111 each coordinate Zn(2+). Asparagine 132, asparagine 174, and asparagine 187 each carry an N-linked (GlcNAc...) asparagine glycan. Histidine 236 provides a ligand contact to Zn(2+). Residue asparagine 251 is glycosylated (N-linked (GlcNAc...) asparagine). Glutamate 310 functions as the Proton donor/acceptor in the catalytic mechanism. Aspartate 352 carries the GPI-anchor amidated aspartate lipid modification. Positions 353-374 (SAGRVTSATMLLGLLVSCMSLL) are cleaved as a propeptide — removed in mature form.

This sequence belongs to the peptidase M14 family. It depends on Zn(2+) as a cofactor. N-glycosylated. Detected in enterocytes of the ileum.

It is found in the apical cell membrane. With respect to regulation, strongly inhibited by potato carboxypeptidase inhibitor, and the chelating agents EDTA and 1,10-phenanthroline. Also inhibited by compounds with multiple carboxylic acid groups such as citrate and succinate, and to a lesser exent the amino acids aspartate and glutamate. Not significantly inhibited by benzylsuccinic acid. Carboxypeptidase which preferentially cleaves C-terminal acidic residues from peptides and proteins. Can also cleave C-terminal hydrophobic amino acids, with a preference for small residues over large residues. The polypeptide is Carboxypeptidase O (Homo sapiens (Human)).